A 710-amino-acid chain; its full sequence is Pentatricopeptide repeat-containing protein At3g14330 (710 aa).

PPR repeat units lie at residues 166–196 (NPKL…VTDS), 200–234 (TEKV…FIEP), 235–269 (GNFS…KEKV), 270–304 (DQVV…NVVT), 305–331 (WNSL…MQEE), 336–370 (SWAT…KEKP), 371–401 (DVPL…MLTK), 402–436 (DLAS…GVAP), 437–467 (DGIT…MKTE), and 473–503 (ALEH…MPFK). A type E motif region spans residues 508-583 (IWGSLLNSCR…EAGCSWVQVK (76 aa)). The segment at 584 to 615 (DKIQIFVAGGGYEFRNSDEYKKVWTELQEAIE) is type E(+) motif. Positions 616–710 (KSGYSPNTSV…DGICSCKDYW (95 aa)) are type DYW motif.

The protein belongs to the PPR family. PCMP-H subfamily.

The protein is Pentatricopeptide repeat-containing protein At3g14330 (PCMP-H57) of Arabidopsis thaliana (Mouse-ear cress).